The sequence spans 174 residues: Crossover junction endodeoxyribonuclease RuvC (174 aa).

Residues D8, E67, and D139 contribute to the active site. Mg(2+) is bound by residues D8, E67, and D139.

The protein belongs to the RuvC family. Homodimer which binds Holliday junction (HJ) DNA. The HJ becomes 2-fold symmetrical on binding to RuvC with unstacked arms; it has a different conformation from HJ DNA in complex with RuvA. In the full resolvosome a probable DNA-RuvA(4)-RuvB(12)-RuvC(2) complex forms which resolves the HJ. Requires Mg(2+) as cofactor.

The protein resides in the cytoplasm. The catalysed reaction is Endonucleolytic cleavage at a junction such as a reciprocal single-stranded crossover between two homologous DNA duplexes (Holliday junction).. In terms of biological role, the RuvA-RuvB-RuvC complex processes Holliday junction (HJ) DNA during genetic recombination and DNA repair. Endonuclease that resolves HJ intermediates. Cleaves cruciform DNA by making single-stranded nicks across the HJ at symmetrical positions within the homologous arms, yielding a 5'-phosphate and a 3'-hydroxyl group; requires a central core of homology in the junction. The consensus cleavage sequence is 5'-(A/T)TT(C/G)-3'. Cleavage occurs on the 3'-side of the TT dinucleotide at the point of strand exchange. HJ branch migration catalyzed by RuvA-RuvB allows RuvC to scan DNA until it finds its consensus sequence, where it cleaves and resolves the cruciform DNA. In Pseudomonas aeruginosa (strain LESB58), this protein is Crossover junction endodeoxyribonuclease RuvC.